We begin with the raw amino-acid sequence, 38 residues long: Photosystem II reaction center protein L (38 aa).

A helical membrane pass occupies residues 17–37 (SLFWGLLLIFVLAVLFSSYFF).

This sequence belongs to the PsbL family. PSII is composed of 1 copy each of membrane proteins PsbA, PsbB, PsbC, PsbD, PsbE, PsbF, PsbH, PsbI, PsbJ, PsbK, PsbL, PsbM, PsbT, PsbX, PsbY, PsbZ, Psb30/Ycf12, at least 3 peripheral proteins of the oxygen-evolving complex and a large number of cofactors. It forms dimeric complexes.

It is found in the plastid. The protein localises to the chloroplast thylakoid membrane. One of the components of the core complex of photosystem II (PSII). PSII is a light-driven water:plastoquinone oxidoreductase that uses light energy to abstract electrons from H(2)O, generating O(2) and a proton gradient subsequently used for ATP formation. It consists of a core antenna complex that captures photons, and an electron transfer chain that converts photonic excitation into a charge separation. This subunit is found at the monomer-monomer interface and is required for correct PSII assembly and/or dimerization. The protein is Photosystem II reaction center protein L of Porphyra purpurea (Red seaweed).